Consider the following 60-residue polypeptide: Large ribosomal subunit protein uL30 (60 aa).

Belongs to the universal ribosomal protein uL30 family. As to quaternary structure, part of the 50S ribosomal subunit.

This chain is Large ribosomal subunit protein uL30, found in Salinispora arenicola (strain CNS-205).